The following is a 94-amino-acid chain: Acylphosphatase (94 aa).

An Acylphosphatase-like domain is found at 3-90; sequence RVHVIVEGRV…SDEKQFRIMY (88 aa). Catalysis depends on residues Arg18 and Asn36.

Belongs to the acylphosphatase family.

It catalyses the reaction an acyl phosphate + H2O = a carboxylate + phosphate + H(+). The polypeptide is Acylphosphatase (acyP) (Geobacillus kaustophilus (strain HTA426)).